A 285-amino-acid chain; its full sequence is HTH-type transcriptional regulator MurR (285 aa).

One can recognise an HTH rpiR-type domain in the interval Met-1–Ser-77. A DNA-binding region (H-T-H motif) is located at residues Ser-37 to Gln-56. The region spanning Ile-128–Val-268 is the SIS domain.

As to quaternary structure, homotetramer.

The protein operates within amino-sugar metabolism; N-acetylmuramate degradation [regulation]. Functionally, represses the expression of the murPQ operon involved in the uptake and degradation of N-acetylmuramic acid (MurNAc). Binds to two adjacent inverted repeats within the operator region. MurNAc 6-phosphate, the substrate of MurQ, is the specific inducer that weakens binding of MurR to the operator. The chain is HTH-type transcriptional regulator MurR from Escherichia coli O157:H7.